The sequence spans 269 residues: GRF-interacting factor 10 (269 aa).

The tract at residues Met-1 to Asp-71 is disordered. The span at Gln-22–Gly-43 shows a compositional bias: low complexity. The span at Glu-47–Cys-69 shows a compositional bias: basic and acidic residues. Residues Ala-113–Lys-148 form the QLQ domain. Residues Glu-179–Glu-223 enclose the WRC domain. 2 consecutive short sequence motifs (bipartite nuclear localization signal) follow at residues Arg-184–Arg-194 and Arg-212–Arg-216. Residues Pro-217 to Thr-269 form a disordered region. Positions Glu-243–Pro-253 are enriched in basic and acidic residues.

This sequence belongs to the GRF family. Interacts with GIF1. Highly expressed in shoots. Expressed in developing leaves.

It localises to the nucleus. Involved in the regulation of cell proliferation in developing shoots and leaves. Does not possess transactivation activity. The chain is GRF-interacting factor 10 from Zea mays (Maize).